The sequence spans 90 residues: MKTAIFTVVLALAVFAVLSFGWEANEKALSEESTELIHEKEAASETEARECRYFWGECHDHMPCCDWLVCRYKWPITYNICVWNRTFPEK.

The signal sequence occupies residues 1–19; sequence MKTAIFTVVLALAVFAVLS. Residues 20–50 constitute a propeptide that is removed on maturation; that stretch reads FGWEANEKALSEESTELIHEKEAASETEARE. 3 disulfide bridges follow: cysteine 51-cysteine 65, cysteine 58-cysteine 70, and cysteine 64-cysteine 81.

This sequence belongs to the neurotoxin 10 (Hwtx-1) family. 13 (Hntx-13) subfamily. In terms of tissue distribution, expressed by the venom gland.

It localises to the secreted. Ion channel inhibitor. This is U7-theraphotoxin-Hhn1a 5 from Cyriopagopus hainanus (Chinese bird spider).